The sequence spans 237 residues: E3 ubiquitin-protein ligase RNF166 (237 aa).

The RING-type zinc finger occupies Cys33–Arg73. Residues Cys98, Cys101, His113, and Cys117 each contribute to the Zn(2+) site. The C2HC RNF-type zinc-finger motif lies at Cys98–Cys117. The UIM domain occupies Asp221–Asn237.

The protein resides in the cytoplasm. The catalysed reaction is S-ubiquitinyl-[E2 ubiquitin-conjugating enzyme]-L-cysteine + [acceptor protein]-L-lysine = [E2 ubiquitin-conjugating enzyme]-L-cysteine + N(6)-ubiquitinyl-[acceptor protein]-L-lysine.. The protein operates within protein modification; protein ubiquitination. Its function is as follows. E3 ubiquitin-protein ligase that promotes the ubiquitination of different substrates. In turn, participates in different biological processes including interferon production or autophagy. Plays a role in the activation of RNA virus-induced interferon-beta production by promoting the ubiquitination of TRAF3 and TRAF6. Also plays a role in the early recruitment of autophagy adapters to bacteria. Mediates 'Lys-29' and 'Lys-33'-linked ubiquitination of SQSTM1 leading to xenophagic targeting of bacteria and inhibition of their replication. This is E3 ubiquitin-protein ligase RNF166 (Rnf166) from Mus musculus (Mouse).